The following is a 130-amino-acid chain: Small ribosomal subunit protein uS9 (130 aa).

It belongs to the universal ribosomal protein uS9 family.

The chain is Small ribosomal subunit protein uS9 from Bacillus mycoides (strain KBAB4) (Bacillus weihenstephanensis).